The primary structure comprises 2282 residues: Protein Ycf2 (2282 aa).

An ATP-binding site is contributed by 1637–1644; the sequence is GSIGTGRS.

Belongs to the Ycf2 family.

It localises to the plastid. The protein resides in the chloroplast stroma. Its function is as follows. Probable ATPase of unknown function. Its presence in a non-photosynthetic plant (Epifagus virginiana) and experiments in tobacco indicate that it has an essential function which is probably not related to photosynthesis. The chain is Protein Ycf2 from Citrus sinensis (Sweet orange).